The sequence spans 112 residues: MYB-like transcription factor ETC2 (112 aa).

One can recognise a Myb-like domain in the interval 41-78 (TEQEEDLISRMYRLVGNRWDLIAGRVVGRKANEIERYW).

As to quaternary structure, interacts with GL3. In terms of tissue distribution, expressed in stomatal guard mother cells, young stomata and trichomes of young leaves, and inflorescences.

The protein resides in the nucleus. MYB-type transcription factor involved in epidermal cell fate specification. Acts as a negative regulator of trichome development, by mediating lateral inhibition. Promotes the formation of hair developing cells in H position in root epidermis, probably by inhibiting non-hair cell formation. In Arabidopsis thaliana (Mouse-ear cress), this protein is MYB-like transcription factor ETC2 (ETC2).